The sequence spans 213 residues: Pyridoxine/pyridoxamine 5'-phosphate oxidase (213 aa).

Substrate contacts are provided by residues 9 to 12 (RKSY) and lysine 67. Residues 62–67 (RVVLIK), 77–78 (YT), arginine 83, and lysine 84 contribute to the FMN site. 3 residues coordinate substrate: tyrosine 124, arginine 128, and serine 132. Residues 141 to 142 (QS) and tryptophan 185 contribute to the FMN site. Residue 191–193 (RLH) participates in substrate binding. Arginine 195 is an FMN binding site.

It belongs to the pyridoxamine 5'-phosphate oxidase family. In terms of assembly, homodimer. The cofactor is FMN.

It catalyses the reaction pyridoxamine 5'-phosphate + O2 + H2O = pyridoxal 5'-phosphate + H2O2 + NH4(+). It carries out the reaction pyridoxine 5'-phosphate + O2 = pyridoxal 5'-phosphate + H2O2. Its pathway is cofactor metabolism; pyridoxal 5'-phosphate salvage; pyridoxal 5'-phosphate from pyridoxamine 5'-phosphate: step 1/1. It functions in the pathway cofactor metabolism; pyridoxal 5'-phosphate salvage; pyridoxal 5'-phosphate from pyridoxine 5'-phosphate: step 1/1. Its function is as follows. Catalyzes the oxidation of either pyridoxine 5'-phosphate (PNP) or pyridoxamine 5'-phosphate (PMP) into pyridoxal 5'-phosphate (PLP). In Methylibium petroleiphilum (strain ATCC BAA-1232 / LMG 22953 / PM1), this protein is Pyridoxine/pyridoxamine 5'-phosphate oxidase.